The following is a 180-amino-acid chain: WPP domain-containing protein 2 (180 aa).

Residues 1-26 (MAETAETINTTISSPPPESESSTTIS) show a composition bias toward low complexity. Disordered regions lie at residues 1-61 (MAET…LRIW) and 140-180 (SVKA…KSEA). The span at 27–36 (AMTDPTSQEA) shows a compositional bias: polar residues. The span at 37–53 (ASKDTDLTKEAESEKKP) shows a compositional bias: basic and acidic residues. Residues 44–147 (TKEAESEKKP…LESVKARSNA (104 aa)) are WPP. Ser173 is modified (phosphoserine).

In terms of assembly, binds to FPP proteins. Interacts with WAP, WIP1, WIP2 and WIP3 through its WPP domain. Interacts with WIT1 and HSP70-1. In terms of tissue distribution, expressed in roots, stems, leaves and flowers.

Its subcellular location is the nucleus envelope. The protein resides in the cytoplasm. It localises to the nucleus. It is found in the golgi apparatus. Its function is as follows. Regulates the mitotic activity in roots. Plays a role with HSP70-1 in facilitating WIT1 nuclear envelope targeting. The protein is WPP domain-containing protein 2 (WPP2) of Arabidopsis thaliana (Mouse-ear cress).